A 179-amino-acid chain; its full sequence is Natural killer cells antigen CD94 (179 aa).

Residues Met1–Arg10 lie on the Cytoplasmic side of the membrane. A helical; Signal-anchor for type II membrane protein transmembrane segment spans residues Leu11–Leu31. The Extracellular segment spans residues Ile32–Ile179. Intrachain disulfides connect Cys58–Cys70, Cys61–Cys72, Cys89–Cys174, and Cys152–Cys166. Residues His68–Lys175 enclose the C-type lectin domain. Residues Asn93 and Asn109 are each glycosylated (N-linked (GlcNAc...) asparagine).

Can form disulfide-bonded heterodimer with NKG2 family members KLRC1 and KLRC2. KLRD1-KLRC1 heterodimer interacts with peptide-bound MHC-E-B2M heterotrimeric complex. KLRD1 plays a prominent role in directly interacting with MHC-E. KLRD1-KLRC1 interacts with much higher affinity with peptide-bound MHC-E-B2M than KLRD1-KLRC2. Interacts with the adapter protein TYROBP/DAP12; this interaction is required for cell surface expression and cell activation.

It is found in the cell membrane. Functionally, immune receptor involved in self-nonself discrimination. In complex with KLRC1 or KLRC2 on cytotoxic and regulatory lymphocyte subsets, recognizes non-classical major histocompatibility (MHC) class Ib molecule MHC-E loaded with self-peptides derived from the signal sequence of classical MHC class Ia and non-classical MHC class Ib molecules. Enables cytotoxic cells to monitor the expression of MHC class I molecules in healthy cells and to tolerate self. Primarily functions as a ligand binding subunit as it lacks the capacity to signal. In terms of biological role, KLRD1-KLRC1 acts as an immune inhibitory receptor. Key inhibitory receptor on natural killer (NK) cells that regulates their activation and effector functions. Dominantly counteracts T cell receptor signaling on a subset of memory/effector CD8-positive T cells as part of an antigen-driven response to avoid autoimmunity. On intraepithelial CD8-positive gamma-delta regulatory T cells triggers TGFB1 secretion, which in turn limits the cytotoxic programming of intraepithelial CD8-positive alpha-beta T cells, distinguishing harmless from pathogenic antigens. In MHC-E-rich tumor microenvironment, acts as an immune inhibitory checkpoint and may contribute to progressive loss of effector functions of NK cells and tumor-specific T cells, a state known as cell exhaustion. Upon MHC-E-peptide binding, transmits intracellular signals through KLRC1 immunoreceptor tyrosine-based inhibition motifs (ITIMs) by recruiting INPP5D/SHIP-1 and INPPL1/SHIP-2 tyrosine phosphatases to ITIMs, and ultimately opposing signals transmitted by activating receptors through dephosphorylation of proximal signaling molecules. Its function is as follows. KLRD1-KLRC2 acts as an immune activating receptor. On cytotoxic lymphocyte subsets recognizes MHC-E loaded with signal sequence-derived peptides from non-classical MHC class Ib MHC-G molecules, likely playing a role in the generation and effector functions of adaptive NK cells and in maternal-fetal tolerance during pregnancy. Regulates the effector functions of terminally differentiated cytotoxic lymphocyte subsets, and in particular may play a role in adaptive NK cell response to viral infection. Upon MHC-E-peptide binding, transmits intracellular signals via the adapter protein TYROBP/DAP12, triggering the phosphorylation of proximal signaling molecules and cell activation. In Mus musculus (Mouse), this protein is Natural killer cells antigen CD94 (Klrd1).